Here is a 224-residue protein sequence, read N- to C-terminus: UPF0758 protein PFLU_5982 (224 aa).

The 123-residue stretch at 102–224 folds into the MPN domain; it reads VLESPKAVRD…PLSMAEYGWL (123 aa). Residues His-173, His-175, and Asp-186 each coordinate Zn(2+). The short motif at 173–186 is the JAMM motif element; the sequence is HNHPSGSLEPSAAD.

Belongs to the UPF0758 family.

This Pseudomonas fluorescens (strain SBW25) protein is UPF0758 protein PFLU_5982.